Consider the following 148-residue polypeptide: Putative nickel-responsive regulator (148 aa).

Ni(2+) contacts are provided by H88, H99, H101, and C107.

Belongs to the transcriptional regulatory CopG/NikR family. It depends on Ni(2+) as a cofactor.

In terms of biological role, transcriptional regulator. This is Putative nickel-responsive regulator from Helicobacter pylori (strain G27).